We begin with the raw amino-acid sequence, 88 residues long: Small ribosomal subunit protein uS17 (88 aa).

It belongs to the universal ribosomal protein uS17 family. As to quaternary structure, part of the 30S ribosomal subunit.

In terms of biological role, one of the primary rRNA binding proteins, it binds specifically to the 5'-end of 16S ribosomal RNA. The protein is Small ribosomal subunit protein uS17 of Synechococcus sp. (strain CC9311).